A 200-amino-acid polypeptide reads, in one-letter code: Phospholipase A2 inhibitor LNF2 (200 aa).

The first 19 residues, methionine 1–serine 19, serve as a signal peptide directing secretion. Intrachain disulfides connect cysteine 22–cysteine 46, cysteine 25–cysteine 32, cysteine 39–cysteine 67, cysteine 73–cysteine 94, cysteine 95–cysteine 100, cysteine 118–cysteine 143, cysteine 136–cysteine 165, and cysteine 169–cysteine 191. A glycan (N-linked (GlcNAc...) asparagine) is linked at asparagine 176.

The protein belongs to the CNF-like-inhibitor family. Occurs as a mixture of oligomers. Tetrameric arrangement appears to be the predominant quaternary structure. As to expression, expressed by the liver.

The protein localises to the secreted. In terms of biological role, inhibits the enzymatic activity of phospholipase A2 (PA2). This Lachesis muta muta (Bushmaster) protein is Phospholipase A2 inhibitor LNF2.